A 325-amino-acid polypeptide reads, in one-letter code: Germination protease (325 aa).

The propeptide occupies 1–7; it reads MYNVRTD.

Belongs to the peptidase A25 family. In terms of assembly, homotetramer. Post-translationally, autoproteolytically processed. The inactive tetrameric zymogen termed p46 autoprocesses to a smaller form termed p41, which is active only during spore germination.

The enzyme catalyses Endopeptidase action with P4 Glu or Asp, P1 preferably Glu &gt; Asp, P1' hydrophobic and P2' Ala.. Its function is as follows. Initiates the rapid degradation of small, acid-soluble proteins during spore germination. The chain is Germination protease from Clostridium perfringens (strain ATCC 13124 / DSM 756 / JCM 1290 / NCIMB 6125 / NCTC 8237 / Type A).